Consider the following 351-residue polypeptide: DNA nickase (351 aa).

Fe cation-binding residues include His241, Glu245, and His303.

Functionally, acts as a DNA nickase. The polypeptide is DNA nickase (Nostoc sp. (strain PCC 7120 / SAG 25.82 / UTEX 2576)).